Consider the following 624-residue polypeptide: Chaperone protein HtpG (624 aa).

Residues 1–336 form an a; substrate-binding region; the sequence is MKGQETRGFQ…SNDLPLNVSR (336 aa). The interval 337–552 is b; the sequence is EILQDSTVTR…ADEMSTQMAK (216 aa). The segment at 553-624 is c; the sequence is LFAAAGQAVP…IRRMNQLLVS (72 aa).

It belongs to the heat shock protein 90 family. As to quaternary structure, homodimer.

Its subcellular location is the cytoplasm. In terms of biological role, molecular chaperone. Has ATPase activity. This chain is Chaperone protein HtpG, found in Citrobacter koseri (strain ATCC BAA-895 / CDC 4225-83 / SGSC4696).